Here is a 333-residue protein sequence, read N- to C-terminus: Holliday junction branch migration complex subunit RuvB (333 aa).

The tract at residues methionine 1 to tyrosine 181 is large ATPase domain (RuvB-L). Residues leucine 20, arginine 21, glycine 62, lysine 65, threonine 66, threonine 67, glutamate 128–phenylalanine 130, arginine 171, tyrosine 181, and arginine 218 each bind ATP. A Mg(2+)-binding site is contributed by threonine 66. Residues glutamine 182 to aspartate 252 are small ATPAse domain (RuvB-S). The interval alanine 255 to aspartate 333 is head domain (RuvB-H). Residues arginine 291, arginine 310, and arginine 315 each contribute to the DNA site.

This sequence belongs to the RuvB family. As to quaternary structure, homohexamer. Forms an RuvA(8)-RuvB(12)-Holliday junction (HJ) complex. HJ DNA is sandwiched between 2 RuvA tetramers; dsDNA enters through RuvA and exits via RuvB. An RuvB hexamer assembles on each DNA strand where it exits the tetramer. Each RuvB hexamer is contacted by two RuvA subunits (via domain III) on 2 adjacent RuvB subunits; this complex drives branch migration. In the full resolvosome a probable DNA-RuvA(4)-RuvB(12)-RuvC(2) complex forms which resolves the HJ.

It is found in the cytoplasm. It carries out the reaction ATP + H2O = ADP + phosphate + H(+). Functionally, the RuvA-RuvB-RuvC complex processes Holliday junction (HJ) DNA during genetic recombination and DNA repair, while the RuvA-RuvB complex plays an important role in the rescue of blocked DNA replication forks via replication fork reversal (RFR). RuvA specifically binds to HJ cruciform DNA, conferring on it an open structure. The RuvB hexamer acts as an ATP-dependent pump, pulling dsDNA into and through the RuvAB complex. RuvB forms 2 homohexamers on either side of HJ DNA bound by 1 or 2 RuvA tetramers; 4 subunits per hexamer contact DNA at a time. Coordinated motions by a converter formed by DNA-disengaged RuvB subunits stimulates ATP hydrolysis and nucleotide exchange. Immobilization of the converter enables RuvB to convert the ATP-contained energy into a lever motion, pulling 2 nucleotides of DNA out of the RuvA tetramer per ATP hydrolyzed, thus driving DNA branch migration. The RuvB motors rotate together with the DNA substrate, which together with the progressing nucleotide cycle form the mechanistic basis for DNA recombination by continuous HJ branch migration. Branch migration allows RuvC to scan DNA until it finds its consensus sequence, where it cleaves and resolves cruciform DNA. The polypeptide is Holliday junction branch migration complex subunit RuvB (Lactococcus lactis subsp. lactis (strain IL1403) (Streptococcus lactis)).